The sequence spans 179 residues: Bifunctional protein PyrR (179 aa).

The short motif at 99 to 111 is the PRPP-binding element; that stretch reads VILVDDVLYTGRT.

This sequence belongs to the purine/pyrimidine phosphoribosyltransferase family. PyrR subfamily. As to quaternary structure, homodimer and homohexamer; in equilibrium.

The enzyme catalyses UMP + diphosphate = 5-phospho-alpha-D-ribose 1-diphosphate + uracil. Regulates transcriptional attenuation of the pyrimidine nucleotide (pyr) operon by binding in a uridine-dependent manner to specific sites on pyr mRNA. This disrupts an antiterminator hairpin in the RNA and favors formation of a downstream transcription terminator, leading to a reduced expression of downstream genes. Functionally, also displays a weak uracil phosphoribosyltransferase activity which is not physiologically significant. The chain is Bifunctional protein PyrR from Brevibacillus brevis (strain 47 / JCM 6285 / NBRC 100599).